Consider the following 333-residue polypeptide: 2-oxoglutarate-dependent dioxygenase 21, chloroplastic (333 aa).

A chloroplast-targeting transit peptide spans 1-43; the sequence is MPAVAGSLYMASQHKGVPPPLPPPPRPLPVINLGRLTMDSASR. Residues 180 to 281 form the Fe2OG dioxygenase domain; the sequence is GVQFVALNNY…RISIASIHGL (102 aa). Histidine 205, aspartate 207, and histidine 262 together coordinate Fe cation. Residue arginine 272 coordinates 2-oxoglutarate.

It belongs to the iron/ascorbate-dependent oxidoreductase family. The cofactor is Fe(2+). L-ascorbate is required as a cofactor. Expressed in roots.

It localises to the plastid. It is found in the chloroplast. The catalysed reaction is melatonin + 2-oxoglutarate + O2 = 2-hydroxymelatonin + succinate + CO2. In terms of biological role, involved in melatonin degradation. Catalyzes the hydroxylation of melatonin to produce 2-hydroxymelatonin. The sequence is that of 2-oxoglutarate-dependent dioxygenase 21, chloroplastic from Oryza sativa subsp. japonica (Rice).